A 190-amino-acid chain; its full sequence is Shikimate kinase (190 aa).

26–31 (GSGKST) is a binding site for ATP. Ser30 contributes to the Mg(2+) binding site. Asp48, Arg72, and Gly94 together coordinate substrate. Arg133 is a binding site for ATP. Arg152 lines the substrate pocket.

It belongs to the shikimate kinase family. As to quaternary structure, monomer. Mg(2+) serves as cofactor.

The protein localises to the cytoplasm. The enzyme catalyses shikimate + ATP = 3-phosphoshikimate + ADP + H(+). It participates in metabolic intermediate biosynthesis; chorismate biosynthesis; chorismate from D-erythrose 4-phosphate and phosphoenolpyruvate: step 5/7. Its function is as follows. Catalyzes the specific phosphorylation of the 3-hydroxyl group of shikimic acid using ATP as a cosubstrate. This Prochlorococcus marinus (strain SARG / CCMP1375 / SS120) protein is Shikimate kinase.